The chain runs to 574 residues: Developmental and secondary metabolism regulator veA (574 aa).

4 disordered regions span residues 1-22 (MATR…SRIT), 39-60 (ERAR…VDPP), 255-500 (RSSD…GAGK), and 513-548 (RSYE…GRNF). Residues 25 to 230 (GKKLTYKLNV…AEQGCRVRIR (206 aa)) form the Velvet domain. Positions 39–44 (ERARAC) match the Nuclear localization signal motif. Composition is skewed to pro residues over residues 314-323 (RPMPPAPVPA) and 330-341 (PAPPAPPAPPSH). 4 stretches are compositionally biased toward polar residues: residues 343-359 (PGYQ…TQYP), 385-394 (HARNPSTSAE), 402-415 (YPSS…SSYP), and 448-458 (VAQSAGPRSQT). Residues 457–501 (QTPSSSLVPSLPPLKALSGDYPNNLSQPSSSISQSPSHDLGAGKK) are PEST. Low complexity-rich tracts occupy residues 459 to 474 (PSSS…KALS) and 482 to 493 (SQPSSSISQSPS). Composition is skewed to basic and acidic residues over residues 513-525 (RSYE…DDRP) and 532-543 (PDTESHPRRLSD).

Belongs to the velvet family. VeA subfamily. Component of the heterotrimeric velvet complex composed of laeA, veA and velB; VeA acting as a bridging protein between laeA and velB.

The protein localises to the nucleus. Its subcellular location is the cytoplasm. Functionally, component of the velvet transcription factor complex that controls sexual/asexual developmental ratio in response to light, promoting sexual development in the darkness while stimulating asexual sporulation under illumination. The velvet complex hat acts as a global regulator for secondary metabolite gene expression. Controls the expression of the aflatoxin gene cluster. Required for the expression of aflR and aflJ. Mediates the coordination of aflatoxigenic vesicles (aflatoxisomes) development with aflatoxin gene expression. Regulates branched chain amino acid and ethanol metabolism and acts as a positive regulator of mitochondrial and peroxisomal beta-oxidation. This is Developmental and secondary metabolism regulator veA from Aspergillus parasiticus.